A 410-amino-acid chain; its full sequence is Kynureninase (410 aa).

Pyridoxal 5'-phosphate contacts are provided by residues Thr108, Ser109, 135-138, Thr176, Asp205, His208, and Tyr230; that span reads FPTD. Residue Lys231 is modified to N6-(pyridoxal phosphate)lysine. Residues Trp260 and Thr286 each coordinate pyridoxal 5'-phosphate.

Belongs to the kynureninase family. As to quaternary structure, homodimer. Requires pyridoxal 5'-phosphate as cofactor.

It carries out the reaction L-kynurenine + H2O = anthranilate + L-alanine + H(+). The catalysed reaction is 3-hydroxy-L-kynurenine + H2O = 3-hydroxyanthranilate + L-alanine + H(+). Its pathway is amino-acid degradation; L-kynurenine degradation; L-alanine and anthranilate from L-kynurenine: step 1/1. The protein operates within cofactor biosynthesis; NAD(+) biosynthesis; quinolinate from L-kynurenine: step 2/3. Catalyzes the cleavage of L-kynurenine (L-Kyn) and L-3-hydroxykynurenine (L-3OHKyn) into anthranilic acid (AA) and 3-hydroxyanthranilic acid (3-OHAA), respectively. This Deinococcus radiodurans (strain ATCC 13939 / DSM 20539 / JCM 16871 / CCUG 27074 / LMG 4051 / NBRC 15346 / NCIMB 9279 / VKM B-1422 / R1) protein is Kynureninase.